A 100-amino-acid chain; its full sequence is Urease subunit gamma (100 aa).

It belongs to the urease gamma subunit family. Heterotrimer of UreA (gamma), UreB (beta) and UreC (alpha) subunits. Three heterotrimers associate to form the active enzyme.

The protein resides in the cytoplasm. The catalysed reaction is urea + 2 H2O + H(+) = hydrogencarbonate + 2 NH4(+). The protein operates within nitrogen metabolism; urea degradation; CO(2) and NH(3) from urea (urease route): step 1/1. In Herpetosiphon aurantiacus (strain ATCC 23779 / DSM 785 / 114-95), this protein is Urease subunit gamma.